Reading from the N-terminus, the 289-residue chain is ATP synthase gamma chain (289 aa).

Belongs to the ATPase gamma chain family. F-type ATPases have 2 components, CF(1) - the catalytic core - and CF(0) - the membrane proton channel. CF(1) has five subunits: alpha(3), beta(3), gamma(1), delta(1), epsilon(1). CF(0) has three main subunits: a, b and c.

It localises to the cell inner membrane. Its function is as follows. Produces ATP from ADP in the presence of a proton gradient across the membrane. The gamma chain is believed to be important in regulating ATPase activity and the flow of protons through the CF(0) complex. In Dichelobacter nodosus (strain VCS1703A), this protein is ATP synthase gamma chain.